Reading from the N-terminus, the 216-residue chain is Large ribosomal subunit protein uL4 (216 aa).

A disordered region spans residues 47–77 (THKVKGMGEVSGTTKKPYRQKGTGNARQGSL).

It belongs to the universal ribosomal protein uL4 family. In terms of assembly, part of the 50S ribosomal subunit.

In terms of biological role, one of the primary rRNA binding proteins, this protein initially binds near the 5'-end of the 23S rRNA. It is important during the early stages of 50S assembly. It makes multiple contacts with different domains of the 23S rRNA in the assembled 50S subunit and ribosome. Functionally, forms part of the polypeptide exit tunnel. This chain is Large ribosomal subunit protein uL4, found in Acidiphilium cryptum (strain JF-5).